We begin with the raw amino-acid sequence, 281 residues long: Cis-2,3-dihydrobiphenyl-2,3-diol dehydrogenase (281 aa).

10–34 (ITGGASGLGRALVDRFVAEGARVAV) lines the NAD(+) pocket. Ser142 contacts substrate. Tyr155 serves as the catalytic Proton acceptor.

It belongs to the short-chain dehydrogenases/reductases (SDR) family. In terms of assembly, homotetramer.

The catalysed reaction is (2R,3S)-3-phenylcyclohexa-3,5-diene-1,2-diol + NAD(+) = biphenyl-2,3-diol + NADH + H(+). The protein operates within xenobiotic degradation; biphenyl degradation; 2-hydroxy-2,4-pentadienoate and benzoate from biphenyl: step 2/4. The polypeptide is Cis-2,3-dihydrobiphenyl-2,3-diol dehydrogenase (bphB) (Comamonas testosteroni (Pseudomonas testosteroni)).